The following is a 397-amino-acid chain: uncharacterized protein (397 aa).

The next 4 helical transmembrane spans lie at 22–42, 270–290, 327–347, and 362–382; these read ILTM…VAVG, IMTT…GIGV, VVLT…GAAL, and VVCG…MLPA.

This sequence belongs to the ABC-4 integral membrane protein family. In terms of assembly, part of a complex composed of YknX, YknY and YknZ. The complex interacts with YknW.

It localises to the cell membrane. It is found in the membrane raft. In terms of biological role, part of an unusual four-component transporter, which is required for protection against the killing factor SdpC (sporulation-delaying protein). This is an uncharacterized protein from Bacillus subtilis (strain 168).